Reading from the N-terminus, the 1183-residue chain is Chromosome partition protein Smc (1183 aa).

32–39 contributes to the ATP binding site; sequence PNGCGKTN. Coiled-coil stretches lie at residues 167–322 and 358–497; these read ITRY…ERLN and AEFE…ALCN. The interval 409–442 is disordered; that stretch reads KEHLEGSVNRLDQRKRDLERSMEQAEPERRRTSE. Positions 419–442 are enriched in basic and acidic residues; that stretch reads LDQRKRDLERSMEQAEPERRRTSE. Positions 523 to 632 constitute an SMC hinge domain; it reads LGCLSDLISV…VADLDAAEQL (110 aa). Coiled coils occupy residues 669–941 and 980–1025; these read GKKA…VMER and NELA…ALEK.

The protein belongs to the SMC family. In terms of assembly, homodimer.

The protein resides in the cytoplasm. In terms of biological role, required for chromosome condensation and partitioning. In Chlorobaculum tepidum (strain ATCC 49652 / DSM 12025 / NBRC 103806 / TLS) (Chlorobium tepidum), this protein is Chromosome partition protein Smc.